A 217-amino-acid polypeptide reads, in one-letter code: tRNA (guanine-N(7)-)-methyltransferase (217 aa).

S-adenosyl-L-methionine-binding residues include glutamate 44, aspartate 69, aspartate 96, and aspartate 118. The active site involves aspartate 118. Residue lysine 122 participates in substrate binding. An interaction with RNA region spans residues arginine 124–arginine 129. Substrate contacts are provided by residues aspartate 154 and threonine 193–glutamate 196.

This sequence belongs to the class I-like SAM-binding methyltransferase superfamily. TrmB family.

It catalyses the reaction guanosine(46) in tRNA + S-adenosyl-L-methionine = N(7)-methylguanosine(46) in tRNA + S-adenosyl-L-homocysteine. Its pathway is tRNA modification; N(7)-methylguanine-tRNA biosynthesis. Catalyzes the formation of N(7)-methylguanine at position 46 (m7G46) in tRNA. The chain is tRNA (guanine-N(7)-)-methyltransferase from Lactococcus lactis subsp. cremoris (strain SK11).